The chain runs to 116 residues: NADH-ubiquinone oxidoreductase chain 3 (116 aa).

A run of 3 helical transmembrane segments spans residues 3 to 23 (LVTTIITITITLSAVLATISF), 56 to 76 (FFLIAILFLLFDLEIALLLPL), and 84 to 104 (APTLTLLWSTAVLALLTLGLI).

This sequence belongs to the complex I subunit 3 family.

The protein resides in the mitochondrion membrane. The enzyme catalyses a ubiquinone + NADH + 5 H(+)(in) = a ubiquinol + NAD(+) + 4 H(+)(out). Its function is as follows. Core subunit of the mitochondrial membrane respiratory chain NADH dehydrogenase (Complex I) that is believed to belong to the minimal assembly required for catalysis. Complex I functions in the transfer of electrons from NADH to the respiratory chain. The immediate electron acceptor for the enzyme is believed to be ubiquinone. The protein is NADH-ubiquinone oxidoreductase chain 3 (MT-ND3) of Oncorhynchus nerka (Sockeye salmon).